Reading from the N-terminus, the 335-residue chain is POU domain, class 5, transcription factor 2 (335 aa).

Positions 1–23 are disordered; that stretch reads MAGRRSSNVCPFPGNSGGGLEGP. The 75-residue stretch at 113–187 folds into the POU-specific domain; sequence DVSAIQKEME…LLKMWLEEVD (75 aa). The homeobox DNA-binding region spans 205 to 264; that stretch reads RKRRRASRERRIGSNLEKLFLQCPEPTPQQISYIAGRLRLQKDLVQVWFSNRSQMAGWPT.

It belongs to the POU transcription factor family. Class-5 subfamily. Highly restricted to adult testis.

The protein resides in the nucleus. Functionally, transcription factor that binds preferentially to the octamer motif (5'-ATGTTAAT-3'). May exert a regulatory function in meiotic events that are required for terminal differentiation of male germ cell. This is POU domain, class 5, transcription factor 2 (Pou5f2) from Rattus norvegicus (Rat).